The sequence spans 428 residues: Homocitrate synthase, cytosolic isozyme (428 aa).

Positions 23–276 constitute a Pyruvate carboxyltransferase domain; that stretch reads FQLIDSTLRE…KSKYKLHKIR (254 aa). Arg31 is a binding site for 2-oxoglutarate. A Mg(2+)-binding site is contributed by Glu32. 3 residues coordinate 2-oxoglutarate: His91, Arg151, and Thr185. Residues His212 and His214 each contribute to the Mg(2+) site. His309 acts as the Proton acceptor in catalysis. At Ser385 the chain carries Phosphoserine. Thr396 bears the Phosphothreonine mark. Positions 399-428 are disordered; sequence VLSAKKNKKNDSDVPELATIPAAKRTKPSA. Ser401 and Ser410 each carry phosphoserine.

The protein belongs to the alpha-IPM synthase/homocitrate synthase family. Homocitrate synthase LYS20/LYS21 subfamily. Mg(2+) is required as a cofactor. It depends on Mn(2+) as a cofactor.

The protein localises to the cytoplasm. It catalyses the reaction acetyl-CoA + 2-oxoglutarate + H2O = (2R)-homocitrate + CoA + H(+). The protein operates within amino-acid biosynthesis; L-lysine biosynthesis via AAA pathway; L-alpha-aminoadipate from 2-oxoglutarate: step 1/5. Functionally, catalyzes the aldol-type condensation of 2-oxoglutarate with acetyl-CoA to yield homocitrate. Carries out the first step of the alpha-aminoadipate (AAA) lysine biosynthesis pathway. The chain is Homocitrate synthase, cytosolic isozyme (LYS20) from Saccharomyces cerevisiae (strain ATCC 204508 / S288c) (Baker's yeast).